We begin with the raw amino-acid sequence, 130 residues long: Small ribosomal subunit protein uS11c (130 aa).

This sequence belongs to the universal ribosomal protein uS11 family. Part of the 30S ribosomal subunit.

It localises to the plastid. It is found in the chloroplast. The polypeptide is Small ribosomal subunit protein uS11c (Adiantum capillus-veneris (Maidenhair fern)).